A 407-amino-acid polypeptide reads, in one-letter code: Betaine--homocysteine S-methyltransferase 1 (407 aa).

In terms of domain architecture, Hcy-binding spans 11-314 (KGILERLNSG…YHIRAIAEEL (304 aa)). N6-succinyllysine occurs at positions 40, 93, and 98. Residue Cys217 coordinates Zn(2+). N6-succinyllysine occurs at positions 232 and 241. Positions 299 and 300 each coordinate Zn(2+). Ser330 carries the phosphoserine modification. Lys340 and Lys377 each carry N6-succinyllysine.

As to quaternary structure, homotetramer. It depends on Zn(2+) as a cofactor.

The protein resides in the cytoplasm. It is found in the cytosol. Its subcellular location is the nucleus. It catalyses the reaction L-homocysteine + glycine betaine = N,N-dimethylglycine + L-methionine. It participates in amine and polyamine degradation; betaine degradation; sarcosine from betaine: step 1/2. It functions in the pathway amino-acid biosynthesis; L-methionine biosynthesis via de novo pathway; L-methionine from L-homocysteine (BhmT route): step 1/1. Its function is as follows. Involved in the regulation of homocysteine metabolism. Converts betaine and homocysteine to dimethylglycine and methionine, respectively. This reaction is also required for the irreversible oxidation of choline. This Bos taurus (Bovine) protein is Betaine--homocysteine S-methyltransferase 1 (BHMT).